Reading from the N-terminus, the 355-residue chain is Mitochondrial import inner membrane translocase subunit TIM50 (355 aa).

The transit peptide at 1 to 44 (MAASAAVFLRLRSGLRQGARGLCARLATPPPRAPDQAAEIGSRA) directs the protein to the mitochondrion. Residues 25–61 (RLATPPPRAPDQAAEIGSRAGTKAQTQGPQQQRSSEG) form a disordered region. The Mitochondrial matrix segment spans residues 45–67 (GTKAQTQGPQQQRSSEGPSYAKK). Over residues 47–61 (KAQTQGPQQQRSSEG) the composition is skewed to polar residues. The helical transmembrane segment at 68 to 88 (VALWLARLLGAGGTVSVIYIF) threads the bilayer. Topologically, residues 89 to 355 (GNNAVDENGA…SRLWPRSKQP (267 aa)) are mitochondrial intermembrane. In terms of domain architecture, FCP1 homology spans 145-288 (YYQPPYTLVL…LDLSAFLKTI (144 aa)). Ser343 carries the post-translational modification Phosphoserine.

Belongs to the TIM50 family. Component of the TIM23 complex at least composed of TIMM23, TIMM17 (TIMM17A or TIMM17B) and TIMM50; within this complex, directly interacts with TIMM23. The complex interacts with the TIMM44 component of the PAM complex and with DNAJC15.

It localises to the mitochondrion inner membrane. Essential component of the TIM23 complex, a complex that mediates the translocation of transit peptide-containing proteins across the mitochondrial inner membrane. Has some phosphatase activity in vitro; however such activity may not be relevant in vivo. The chain is Mitochondrial import inner membrane translocase subunit TIM50 (TIMM50) from Bos taurus (Bovine).